A 114-amino-acid chain; its full sequence is T cell receptor beta variable 6-2 (114 aa).

Residues 1–21 (MSLGLLCCGAFSLLWAGPVNA) form the signal peptide. Residues 22-114 (GVTQTPKFRV…TSVYFCASSY (93 aa)) enclose the Ig-like domain. Residues C42 and C110 are joined by a disulfide bond. N84 is a glycosylation site (N-linked (GlcNAc...) asparagine).

Alpha-beta TR is a heterodimer composed of an alpha and beta chain; disulfide-linked. The alpha-beta TR is associated with the transmembrane signaling CD3 coreceptor proteins to form the TR-CD3 (TcR or TCR). The assembly of alpha-beta TR heterodimers with CD3 occurs in the endoplasmic reticulum where a single alpha-beta TR heterodimer associates with one CD3D-CD3E heterodimer, one CD3G-CD3E heterodimer and one CD247 homodimer forming a stable octameric structure. CD3D-CD3E and CD3G-CD3E heterodimers preferentially associate with TR alpha and TR beta chains, respectively. The association of the CD247 homodimer is the last step of TcR assembly in the endoplasmic reticulum and is required for transport to the cell surface.

The protein localises to the cell membrane. Its function is as follows. V region of the variable domain of T cell receptor (TR) beta chain that participates in the antigen recognition. Alpha-beta T cell receptors are antigen specific receptors which are essential to the immune response and are present on the cell surface of T lymphocytes. Recognize peptide-major histocompatibility (MH) (pMH) complexes that are displayed by antigen presenting cells (APC), a prerequisite for efficient T cell adaptive immunity against pathogens. Binding of alpha-beta TR to pMH complex initiates TR-CD3 clustering on the cell surface and intracellular activation of LCK that phosphorylates the ITAM motifs of CD3G, CD3D, CD3E and CD247 enabling the recruitment of ZAP70. In turn ZAP70 phosphorylates LAT, which recruits numerous signaling molecules to form the LAT signalosome. The LAT signalosome propagates signal branching to three major signaling pathways, the calcium, the mitogen-activated protein kinase (MAPK) kinase and the nuclear factor NF-kappa-B (NF-kB) pathways, leading to the mobilization of transcription factors that are critical for gene expression and essential for T cell growth and differentiation. The T cell repertoire is generated in the thymus, by V-(D)-J rearrangement. This repertoire is then shaped by intrathymic selection events to generate a peripheral T cell pool of self-MH restricted, non-autoaggressive T cells. Post-thymic interaction of alpha-beta TR with the pMH complexes shapes TR structural and functional avidity. This Homo sapiens (Human) protein is T cell receptor beta variable 6-2.